Consider the following 503-residue polypeptide: AMP phosphorylase (503 aa).

AMP is bound by residues G168, 194-199 (SRAITS), and T203. D256 functions as the Proton donor in the catalytic mechanism. Positions 264 and 288 each coordinate AMP.

The protein belongs to the thymidine/pyrimidine-nucleoside phosphorylase family. Type 2 subfamily. In terms of assembly, forms an exceptionally large macromolecular structure (&gt;40-mers) in solution.

It catalyses the reaction AMP + phosphate = alpha-D-ribose 1,5-bisphosphate + adenine. The catalysed reaction is CMP + phosphate = cytosine + alpha-D-ribose 1,5-bisphosphate. It carries out the reaction UMP + phosphate = alpha-D-ribose 1,5-bisphosphate + uracil. With respect to regulation, AMP phosphorolysis is allosterically regulated by the substrate AMP. Functionally, catalyzes the conversion of AMP and phosphate to adenine and ribose 1,5-bisphosphate (R15P). Exhibits phosphorylase activity toward CMP, dCMP and UMP in addition to AMP. Functions in an archaeal AMP degradation pathway, together with R15P isomerase and RubisCO. In Thermococcus kodakarensis (strain ATCC BAA-918 / JCM 12380 / KOD1) (Pyrococcus kodakaraensis (strain KOD1)), this protein is AMP phosphorylase.